Here is a 343-residue protein sequence, read N- to C-terminus: Stimulator of interferon genes protein homolog (343 aa).

The N-linked (GlcNAc...) asparagine glycan is linked to Asn84. Helical transmembrane passes span 87–107 (IYLIVGFLLVAFFRISVTGNY) and 109–129 (NVMPTTLFLFQMPLYWIWSFT). Residue Asn157 coordinates 3',2'-cGAMP. Residue Asn187 is glycosylated (N-linked (GlcNAc...) asparagine). The helical transmembrane segment at 195 to 215 (LVILIPDEMFVNGVLESHLLD) threads the bilayer. Residues Arg232, Lys235, Glu255, Thr258, and Ser262 each contribute to the 3',2'-cGAMP site. N-linked (GlcNAc...) asparagine glycans are attached at residues Asn270 and Asn333.

This sequence belongs to the STING family.

The protein localises to the endoplasmic reticulum membrane. Its function is as follows. Facilitator of innate immune signaling that binds cyclic dinucleotides produced in response to infection by bacteria and/or viruses, and promotes the activation of the NF-kappa-B transcription factor Rel (Relish). Recognizes and binds cyclic di-GMP (c-di-GMP), a cyclic dinucleotide messenger produced by bacteria such as L.monocytogenes, leading to activation of the peptidoglycan recognition protein (IMD) signaling pathway and activation of Rel (Relish). Innate immune response is triggered in response to double-stranded RNA from viruses delivered to the cytoplasm: Sting acts by specifically binding cyclic dinucleotides 3',2'-cGAMP and 2',3'-cGAMP produced by cGlr1 and cGlr2 in response to RNA virus in the cytosol. Has a strong preference for 3',2'-cGAMP compared to other cyclic dinucleotides such as 2',3'-cGAMP or 3'3'-c-di-GMP. Upon binding to 3',2'-cGAMP, activates an antiviral immune response, leading to the activation of Rel (Relish). Activated in brain in response to Zika virus infection, leading to autophagy. This is Stimulator of interferon genes protein homolog from Drosophila melanogaster (Fruit fly).